We begin with the raw amino-acid sequence, 1204 residues long: E3 ubiquitin-protein ligase DZIP3 (1204 aa).

Disordered stretches follow at residues methionine 1–glutamate 22 and serine 640–serine 681. Positions serine 649–serine 658 are enriched in basic and acidic residues. Positions lysine 659–serine 668 are enriched in basic residues. Coiled-coil stretches lie at residues lysine 746 to alanine 861 and glutamine 906 to glutamine 941. Residues proline 1088 to alanine 1098 are compositionally biased toward basic and acidic residues. Residues proline 1088–glutamate 1141 form a disordered region. The segment covering glutamine 1099 to alanine 1126 has biased composition (polar residues). Over residues lysine 1132–glutamate 1141 the composition is skewed to acidic residues. Residues cysteine 1144–arginine 1184 form an RING-type; atypical zinc finger.

In terms of assembly, probably interacts with DAZL.

It is found in the cytoplasm. It carries out the reaction S-ubiquitinyl-[E2 ubiquitin-conjugating enzyme]-L-cysteine + [acceptor protein]-L-lysine = [E2 ubiquitin-conjugating enzyme]-L-cysteine + N(6)-ubiquitinyl-[acceptor protein]-L-lysine.. It functions in the pathway protein modification; protein ubiquitination. Its function is as follows. E3 Ubiquitin ligase proteins mediate ubiquitination and subsequent proteasomal degradation of target proteins. E3 ubiquitin ligases accept ubiquitin from an E2 ubiquitin-conjugating enzyme in the form of a thioester and then directly transfers the ubiquitin to targeted substrates. Able to specifically bind RNA. The chain is E3 ubiquitin-protein ligase DZIP3 (Dzip3) from Mus musculus (Mouse).